A 156-amino-acid polypeptide reads, in one-letter code: Calglandulin (156 aa).

EF-hand domains lie at 8–43, 44–79, 82–117, and 118–153; these read EQIT…IGIN, PTKR…YHEK, NQDE…AGEP, and LNEH…ESFK. The Ca(2+) site is built by D131, D133, D135, T137, and E142.

It belongs to the calmodulin family. Calglandulin subfamily. In terms of tissue distribution, expressed by the venom gland.

Its subcellular location is the cytoplasm. In terms of biological role, may be involved in the cellular control mechanism of the secretion of toxins from the gland into the venom. This chain is Calglandulin, found in Hoplocephalus stephensii (Stephens's banded snake).